Here is a 398-residue protein sequence, read N- to C-terminus: S-adenosylmethionine synthase (398 aa).

His-17 is an ATP binding site. Residue Asp-19 participates in Mg(2+) binding. A K(+)-binding site is contributed by Glu-45. L-methionine contacts are provided by Glu-58 and Gln-101. The interval 101–111 is flexible loop; the sequence is QSPDIAQGVDK. ATP contacts are provided by residues 176–178, 243–244, Asp-252, 258–259, and Lys-279; these read DGK, RF, and RK. Asp-252 is a binding site for L-methionine. Residue Lys-283 participates in L-methionine binding.

Belongs to the AdoMet synthase family. In terms of assembly, homotetramer; dimer of dimers. It depends on Mg(2+) as a cofactor. The cofactor is K(+).

It localises to the cytoplasm. It carries out the reaction L-methionine + ATP + H2O = S-adenosyl-L-methionine + phosphate + diphosphate. It functions in the pathway amino-acid biosynthesis; S-adenosyl-L-methionine biosynthesis; S-adenosyl-L-methionine from L-methionine: step 1/1. Functionally, catalyzes the formation of S-adenosylmethionine (AdoMet) from methionine and ATP. The overall synthetic reaction is composed of two sequential steps, AdoMet formation and the subsequent tripolyphosphate hydrolysis which occurs prior to release of AdoMet from the enzyme. This Staphylococcus haemolyticus (strain JCSC1435) protein is S-adenosylmethionine synthase.